Here is a 32-residue protein sequence, read N- to C-terminus: Cytochrome b6-f complex subunit 8 (32 aa).

Residues 6 to 26 (IVGITWAALMVVFTFSLSLVV) form a helical membrane-spanning segment.

It belongs to the PetN family. In terms of assembly, the 4 large subunits of the cytochrome b6-f complex are cytochrome b6, subunit IV (17 kDa polypeptide, PetD), cytochrome f and the Rieske protein, while the 4 small subunits are PetG, PetL, PetM and PetN. The complex functions as a dimer.

The protein resides in the plastid. Its subcellular location is the chloroplast thylakoid membrane. Functionally, component of the cytochrome b6-f complex, which mediates electron transfer between photosystem II (PSII) and photosystem I (PSI), cyclic electron flow around PSI, and state transitions. The protein is Cytochrome b6-f complex subunit 8 of Pinus koraiensis (Korean pine).